The primary structure comprises 107 residues: Putative protein RFPL3S (107 aa).

As to expression, strongly expressed in the testis and weakly in brain, placenta and pancreas.

The protein is Putative protein RFPL3S (RFPL3S) of Homo sapiens (Human).